Reading from the N-terminus, the 145-residue chain is uncharacterized protein (145 aa).

Basic and acidic residues predominate over residues 1-18; sequence MAEQQPSKEEKKEDKKDE. The segment at 1 to 61 is disordered; that stretch reads MAEQQPSKEE…CTEGEWDASD (61 aa).

This is an uncharacterized protein from Caenorhabditis elegans.